A 447-amino-acid polypeptide reads, in one-letter code: N-succinylarginine dihydrolase (447 aa).

Substrate-binding positions include 19-28 (AGLSFGNEAS), Asn-110, and 137-138 (HR). Glu-174 is an active-site residue. Arg-212 contacts substrate. The active site involves His-248. Residues Asp-250 and Asn-359 each contribute to the substrate site. Catalysis depends on Cys-365, which acts as the Nucleophile.

It belongs to the succinylarginine dihydrolase family. Homodimer.

The catalysed reaction is N(2)-succinyl-L-arginine + 2 H2O + 2 H(+) = N(2)-succinyl-L-ornithine + 2 NH4(+) + CO2. It functions in the pathway amino-acid degradation; L-arginine degradation via AST pathway; L-glutamate and succinate from L-arginine: step 2/5. Catalyzes the hydrolysis of N(2)-succinylarginine into N(2)-succinylornithine, ammonia and CO(2). This is N-succinylarginine dihydrolase from Salmonella schwarzengrund (strain CVM19633).